We begin with the raw amino-acid sequence, 152 residues long: Aspartate-rich protein (152 aa).

An N-terminal signal peptide occupies residues 1–19; that stretch reads MQKLLLAVLFFSLLAVATA. The span at 82–113 shows a compositional bias: basic and acidic residues; sequence ATPKTEAEPGSLDKGEGTKGEKGKEGKKEKGE. The disordered stretch occupies residues 82–152; sequence ATPKTEAEPG…VHENDDENED (71 aa). Residues 135–152 are compositionally biased toward acidic residues; the sequence is DDDDDRDDVHENDDENED.

As to expression, prismatic layer of shell (at protein level). Expressed primarily in the mantle with highest level in the mantle edge and lower level in the mantle pallium.

It is found in the secreted. The chain is Aspartate-rich protein from Margaritifera margaritifera (Freshwater pearl mussel).